We begin with the raw amino-acid sequence, 143 residues long: Cytotoxic L-amino-acid oxidase (143 aa).

Belongs to the flavin monoamine oxidase family. The cofactor is FAD.

The catalysed reaction is an L-alpha-amino acid + O2 + H2O = a 2-oxocarboxylate + H2O2 + NH4(+). In terms of biological role, cytotoxic L-amino acid oxidase with high oxidase activity towards DL-methionine and L-methionine, L-phenylalanine, DL-norleucine, L-isoleucine, L-arginine, L-tyrosine, and DL-leucine. Shows relatively low activity towards DL-lysine and L-lysine, DL-asparagine, DL-valine, L-histidine, DL-threonine, DL-tryptophan, and L-glutamic acid; and no activity towards L-cysteine, L-glycine, L-proline, L-oxyproline, DL-serine, and DL-aspartic acid. Does not use benzylamine, ethanolamine, diethylamine, meta- and para-phenylendiamine, ortho-, meta- and para-aminophenols, or putrescin as a substrate. Acts as a toxin by inducing chromatin condensation, as well as DNA and nucleus fragmentation, which are typical for apoptosis. Probably induces cell damage indirectly via the generation of free radicals and oxidant agents that can trigger cell impairment and apoptosis by a caspase-independent pathway. This is Cytotoxic L-amino-acid oxidase from Amanita phalloides (Death cap).